We begin with the raw amino-acid sequence, 930 residues long: Translation initiation factor IF-2 (930 aa).

The segment at 31–317 is disordered; the sequence is FVKSASSTVE…RKSKRAKRAE (287 aa). Over residues 61-78 the composition is skewed to low complexity; it reads PAAGASNGAPAKPSAPGA. Pro residues-rich tracts occupy residues 79–99 and 108–120; these read RPGP…PAPA and PAAP…PPAP. Positions 121-135 are enriched in low complexity; it reads AASAAPPSAPEAPSA. Pro residues-rich tracts occupy residues 136 to 158 and 178 to 192; these read RPTP…PAPR and PRPQ…PRPG. The span at 193–205 shows a compositional bias: gly residues; the sequence is PGAGGPRPGGGPR. Residues 212-242 show a composition bias toward pro residues; that stretch reads NMPPRPVGGPRPGGGPRPGGGPRPGAGPRPT. Over residues 244–301 the composition is skewed to gly residues; the sequence is GGAGRPGGGGGGNYRGGGAGGGGGAGGAAAGGFRGRPGGGGGRPGQRGGAAGAFGRPG. Positions 305–314 are enriched in basic residues; the sequence is KRGRKSKRAK. Residues 426-598 enclose the tr-type G domain; sequence FRPPVVTVMG…VVLTADASLD (173 aa). The segment at 435–442 is G1; that stretch reads GHVDHGKT. A GTP-binding site is contributed by 435 to 442; that stretch reads GHVDHGKT. The segment at 460-464 is G2; that stretch reads GITQH. Positions 485–488 are G3; that stretch reads DTPG. GTP-binding positions include 485–489 and 539–542; these read DTPGH and NKID. A G4 region spans residues 539-542; it reads NKID. Residues 575 to 577 are G5; that stretch reads SAK.

The protein belongs to the TRAFAC class translation factor GTPase superfamily. Classic translation factor GTPase family. IF-2 subfamily.

Its subcellular location is the cytoplasm. Functionally, one of the essential components for the initiation of protein synthesis. Protects formylmethionyl-tRNA from spontaneous hydrolysis and promotes its binding to the 30S ribosomal subunits. Also involved in the hydrolysis of GTP during the formation of the 70S ribosomal complex. The chain is Translation initiation factor IF-2 from Mycolicibacterium gilvum (strain PYR-GCK) (Mycobacterium gilvum (strain PYR-GCK)).